The chain runs to 208 residues: Inner membrane-spanning protein YciB (208 aa).

5 helical membrane-spanning segments follow: residues 49-69 (APVLLATVVVIVATLAQILWL), 78-98 (TMLWVSLALVTALGSATIYFH), 105-125 (WKPTVLYWVMGASLLVGELVF), 150-170 (FSWVAFFAAMGCLNLWVAFNF), and 178-198 (FKLFGGMGLMLVFVLAQAFFL).

The protein belongs to the YciB family.

The protein resides in the cell inner membrane. Functionally, plays a role in cell envelope biogenesis, maintenance of cell envelope integrity and membrane homeostasis. In Polaromonas naphthalenivorans (strain CJ2), this protein is Inner membrane-spanning protein YciB.